The sequence spans 154 residues: Iron-sulfur cluster assembly 2 homolog, mitochondrial (154 aa).

The transit peptide at 1-8 (MAAAWGSS) directs the protein to the mitochondrion. The interval 29–49 (SLGPQARREASSSSPEAGEGQ) is disordered. Positions 39-49 (SSSSPEAGEGQ) are enriched in low complexity. Positions 79, 144, and 146 each coordinate Fe cation.

The protein belongs to the HesB/IscA family. Heterotetramer; forms a dimer of dimers with IBA57. Interacts with [2Fe-2S]-ISCA2 forming the heterodimer [2Fe- 2S]-ISCA2-IBA57 complex; [2Fe-2S] cluster binding is absolutely required to promote the complex formation.

It is found in the mitochondrion. Its function is as follows. Involved in the maturation of mitochondrial 4Fe-4S proteins functioning late in the iron-sulfur cluster assembly pathway. May be involved in the binding of an intermediate of Fe/S cluster assembly. This Homo sapiens (Human) protein is Iron-sulfur cluster assembly 2 homolog, mitochondrial (ISCA2).